Consider the following 974-residue polypeptide: MDDNDDGLMLNFAAPAAGSASVSSKRSKQTAKARFAQKRTAHQLRKQAPKQNRSVAPIESVQGVVTPASARLSPAPASANESPAAKRQRIEATSTSSAALSAPRFDPRSETAKSAPITSRSSQTTSSAASSSRKAIAPVTKLAGSSFASAGASSSASKQTNGGIVSTLFPAHGVLEDSSIALTPFQRKAYHPTNAPSVGSDFASCGLDPLLVYHLASKMNIGSNPTAIQKAALPHLLHPGLDRDILIQAQTGSGKTLTYLLPIVQSLLPLCEESFIDRSVGTLAIVLAPTRELARQIYEVLEKLVSLALSLKEQNQEVEGTVRRTRWLVPGLLSGGSTKNHEKQRLRKGCPILVSTPGRLLDHLQNTSSFDVGKCRWLVLDEADRLLEMGFEEQLTGIVRALDGRRNLACTAARQAMPAYQEGTAPGDADWIPDADVMDTLGMAWWAHARRVVLCSATLDEHVQVLAGKTLVNPKIIRGVKSDAAETSTQVTTDADSTLQKRAVKFAAPAQLAQSFVTTPPKLRLVTLLSLLRSYISRARRQWQHVDHQAGAGRVIVFMSCTDSVDFHYAAFGGARMNASENDASADVQVQDAQLATHVTSELIPDVPIYRLHGSMTQQERISSLKGFSGIRTKHSAERQGFQGSILLCTSVASRGLDLPEVGCVIQLDPPTEGGIEEYLHRVGRTARVGRAGESWLLVLPQELGWVEHVLESHMTIQSSDSASCSCSEIESKKQGSTRKITPASIELVLQQGMGGTMGTLEYQSRATEVQLAFERWVISGERPSLLARKAFLSHVRAYATHSAEEKQYFNVRALHLGHLAKAFALREAPRSLGAKSSAIGASSTPASSHETTNKKRMRIAPDTAESDSSSDSSDDAGSDYESHSNKKGDAFELDKAALAKLTESIVANADGSNRSKKLAREAQKAAAAAGVADDKAKQTDAEARMYAKVRALGKMSKKHGVLGAHAADEFQIA.

Residues 1 to 135 form a disordered region; it reads MDDNDDGLML…SSAASSSRKA (135 aa). The segment covering 13 to 24 has biased composition (low complexity); it reads AAPAAGSASVSS. A compositionally biased stretch (basic residues) spans 25 to 48; that stretch reads KRSKQTAKARFAQKRTAHQLRKQA. Low complexity-rich tracts occupy residues 67 to 85, 92 to 102, and 118 to 133; these read PASA…SPAA, ATSTSSAALSA, and TSRS…SSSR. The short motif at 200 to 230 is the Q motif element; that stretch reads SDFASCGLDPLLVYHLASKMNIGSNPTAIQK. Residues 236-477 form the Helicase ATP-binding domain; that stretch reads LLHPGLDRDI…GKTLVNPKII (242 aa). 249–256 provides a ligand contact to ATP; the sequence is AQTGSGKT. Positions 381-384 match the DEAD box motif; it reads DEAD. Positions 531 to 747 constitute a Helicase C-terminal domain; that stretch reads LLRSYISRAR…TRKITPASIE (217 aa). The interval 836 to 887 is disordered; the sequence is KSSAIGASSTPASSHETTNKKRMRIAPDTAESDSSSDSSDDAGSDYESHSNK. Over residues 840-851 the composition is skewed to polar residues; sequence IGASSTPASSHE.

Belongs to the DEAD box helicase family. DDX31/DBP7 subfamily.

It localises to the nucleus. It is found in the nucleolus. The enzyme catalyses ATP + H2O = ADP + phosphate + H(+). ATP-binding RNA helicase involved in the biogenesis of 60S ribosomal subunits and is required for the normal formation of 25S and 5.8S rRNAs. This chain is ATP-dependent RNA helicase DBP7 (DBP7), found in Mycosarcoma maydis (Corn smut fungus).